Consider the following 84-residue polypeptide: Large ribosomal subunit protein bL27 (84 aa).

Residues 1 to 20 (MAHKKGGGSTKNGRDSNPKY) form a disordered region.

The protein belongs to the bacterial ribosomal protein bL27 family.

The polypeptide is Large ribosomal subunit protein bL27 (Chlorobaculum tepidum (strain ATCC 49652 / DSM 12025 / NBRC 103806 / TLS) (Chlorobium tepidum)).